We begin with the raw amino-acid sequence, 681 residues long: DNA ligase (681 aa).

NAD(+) contacts are provided by residues 33–37 (DGQFD), 83–84 (SL), and Glu113. Residue Lys115 is the N6-AMP-lysine intermediate of the active site. NAD(+)-binding residues include Arg136, Glu176, Lys292, and Lys316. 4 residues coordinate Zn(2+): Cys410, Cys413, Cys429, and Cys435. The BRCT domain maps to 599 to 681 (SIPRNLEGLS…RALLADGPPA (83 aa)).

Belongs to the NAD-dependent DNA ligase family. LigA subfamily. Mg(2+) serves as cofactor. Mn(2+) is required as a cofactor.

The enzyme catalyses NAD(+) + (deoxyribonucleotide)n-3'-hydroxyl + 5'-phospho-(deoxyribonucleotide)m = (deoxyribonucleotide)n+m + AMP + beta-nicotinamide D-nucleotide.. In terms of biological role, DNA ligase that catalyzes the formation of phosphodiester linkages between 5'-phosphoryl and 3'-hydroxyl groups in double-stranded DNA using NAD as a coenzyme and as the energy source for the reaction. It is essential for DNA replication and repair of damaged DNA. This is DNA ligase from Mycobacteroides abscessus (strain ATCC 19977 / DSM 44196 / CCUG 20993 / CIP 104536 / JCM 13569 / NCTC 13031 / TMC 1543 / L948) (Mycobacterium abscessus).